The following is a 549-amino-acid chain: Polynucleotide 5'-hydroxyl-kinase nol-9 (549 aa).

Residue 190-197 coordinates ATP; that stretch reads GHKGAGKS.

It belongs to the Clp1 family. NOL9/GRC3 subfamily.

Its subcellular location is the nucleus. It localises to the nucleolus. Functionally, polynucleotide 5'-kinase involved in rRNA processing. In Caenorhabditis elegans, this protein is Polynucleotide 5'-hydroxyl-kinase nol-9 (nol-9).